A 436-amino-acid polypeptide reads, in one-letter code: Chorion-specific transcription factor GCMa (436 aa).

Positions 14-169 (LSWDINDMKL…KLEAEARRAM (156 aa)) form a DNA-binding region, GCM. Zn(2+) contacts are provided by C76, C82, C86, C113, C116, C125, H152, and H154.

Polyubiquitinated in the presence of UBE2D2 and FBXW2 (in vitro).

It is found in the nucleus. In terms of biological role, transcription factor involved in the control of expression of placental growth factor (PGF) and other placenta-specific genes. Binds to the trophoblast-specific element 2 (TSE2) of the aromatase gene enhancer. Binds to the SYDE1 promoter. Has a central role in mediating the differentiation of trophoblast cells along both the villous and extravillous pathways in placental development. This Rattus norvegicus (Rat) protein is Chorion-specific transcription factor GCMa (Gcm1).